The chain runs to 147 residues: MEKQSIRGKRRARKFALQALYQWLMSGTDLHEIEAQFRTINNMDKVDGEYFCRLLYGIPTHVEALEASLLPYLDREINALNPIELTVLRIGSFELFHCPEIPYKVILDESVSLTKEFGSQEGYRYVNGVLNNLAKQVRSVEVSLDNE.

The protein belongs to the NusB family.

Involved in transcription antitermination. Required for transcription of ribosomal RNA (rRNA) genes. Binds specifically to the boxA antiterminator sequence of the ribosomal RNA (rrn) operons. The polypeptide is Transcription antitermination protein NusB (Legionella pneumophila (strain Paris)).